We begin with the raw amino-acid sequence, 111 residues long: Large ribosomal subunit protein uL23 (111 aa).

Belongs to the universal ribosomal protein uL23 family. Part of the 50S ribosomal subunit. Contacts protein L29, and trigger factor when it is bound to the ribosome.

Its function is as follows. One of the early assembly proteins it binds 23S rRNA. One of the proteins that surrounds the polypeptide exit tunnel on the outside of the ribosome. Forms the main docking site for trigger factor binding to the ribosome. The sequence is that of Large ribosomal subunit protein uL23 from Chlamydia caviae (strain ATCC VR-813 / DSM 19441 / 03DC25 / GPIC) (Chlamydophila caviae).